The primary structure comprises 343 residues: 3-dehydroquinate synthase (343 aa).

NAD(+) contacts are provided by residues 61 to 66 (SGEKYK), 95 to 99 (GVISD), 119 to 120 (TT), Lys-132, Lys-141, and 159 to 162 (FLKT). Zn(2+) is bound by residues Glu-174, His-231, and His-248.

This sequence belongs to the sugar phosphate cyclases superfamily. Dehydroquinate synthase family. Co(2+) is required as a cofactor. Zn(2+) serves as cofactor. Requires NAD(+) as cofactor.

It localises to the cytoplasm. It carries out the reaction 7-phospho-2-dehydro-3-deoxy-D-arabino-heptonate = 3-dehydroquinate + phosphate. It functions in the pathway metabolic intermediate biosynthesis; chorismate biosynthesis; chorismate from D-erythrose 4-phosphate and phosphoenolpyruvate: step 2/7. Functionally, catalyzes the conversion of 3-deoxy-D-arabino-heptulosonate 7-phosphate (DAHP) to dehydroquinate (DHQ). In Helicobacter pylori (strain P12), this protein is 3-dehydroquinate synthase.